We begin with the raw amino-acid sequence, 214 residues long: ATP phosphoribosyltransferase (214 aa).

This sequence belongs to the ATP phosphoribosyltransferase family. Short subfamily. In terms of assembly, heteromultimer composed of HisG and HisZ subunits.

The protein resides in the cytoplasm. It catalyses the reaction 1-(5-phospho-beta-D-ribosyl)-ATP + diphosphate = 5-phospho-alpha-D-ribose 1-diphosphate + ATP. It functions in the pathway amino-acid biosynthesis; L-histidine biosynthesis; L-histidine from 5-phospho-alpha-D-ribose 1-diphosphate: step 1/9. In terms of biological role, catalyzes the condensation of ATP and 5-phosphoribose 1-diphosphate to form N'-(5'-phosphoribosyl)-ATP (PR-ATP). Has a crucial role in the pathway because the rate of histidine biosynthesis seems to be controlled primarily by regulation of HisG enzymatic activity. The sequence is that of ATP phosphoribosyltransferase from Azoarcus sp. (strain BH72).